The following is a 598-amino-acid chain: UvrABC system protein C (598 aa).

In terms of domain architecture, GIY-YIG spans 14 to 91 (DSPGCYLHKD…IQKNMPKYNI (78 aa)). The UVR domain occupies 196 to 231 (DKIIEDLRSKMLAASEEMAFERAAEYRDLISGIATM).

It belongs to the UvrC family. Interacts with UvrB in an incision complex.

It is found in the cytoplasm. Its function is as follows. The UvrABC repair system catalyzes the recognition and processing of DNA lesions. UvrC both incises the 5' and 3' sides of the lesion. The N-terminal half is responsible for the 3' incision and the C-terminal half is responsible for the 5' incision. The protein is UvrABC system protein C of Streptococcus pyogenes serotype M5 (strain Manfredo).